A 262-amino-acid chain; its full sequence is Acyl-[acyl-carrier-protein]--UDP-N-acetylglucosamine O-acyltransferase (262 aa).

The protein belongs to the transferase hexapeptide repeat family. LpxA subfamily. In terms of assembly, homotrimer.

Its subcellular location is the cytoplasm. The catalysed reaction is a (3R)-hydroxyacyl-[ACP] + UDP-N-acetyl-alpha-D-glucosamine = a UDP-3-O-[(3R)-3-hydroxyacyl]-N-acetyl-alpha-D-glucosamine + holo-[ACP]. It functions in the pathway glycolipid biosynthesis; lipid IV(A) biosynthesis; lipid IV(A) from (3R)-3-hydroxytetradecanoyl-[acyl-carrier-protein] and UDP-N-acetyl-alpha-D-glucosamine: step 1/6. Involved in the biosynthesis of lipid A, a phosphorylated glycolipid that anchors the lipopolysaccharide to the outer membrane of the cell. The polypeptide is Acyl-[acyl-carrier-protein]--UDP-N-acetylglucosamine O-acyltransferase (Burkholderia vietnamiensis (strain G4 / LMG 22486) (Burkholderia cepacia (strain R1808))).